A 491-amino-acid chain; its full sequence is Rab5 GDP/GTP exchange factor (491 aa).

The segment at 1–74 is interaction with ubiquitinated proteins; it reads MSLKSERRGI…EEEAFASSQS (74 aa). An A20-type zinc finger spans residues 13–47; sequence DQSDLLCKKGCGYYGNPAWQGFCSKCWREEYHKAR. Zn(2+) contacts are provided by Cys-19, Cys-23, Cys-35, and Cys-38. The interval 66 to 85 is disordered; it reads EEAFASSQSSQGAQSLTFSK. Positions 69–84 are enriched in low complexity; that stretch reads FASSQSSQGAQSLTFS. 2 positions are modified to phosphoserine: Ser-124 and Ser-132. An N6-acetyllysine mark is found at Lys-151 and Lys-170. The VPS9 domain occupies 232–375; the sequence is EKKDLAIQKR…IEKLDAQSLN (144 aa). Residues Ser-373, Ser-377, Ser-390, and Ser-400 each carry the phosphoserine modification. The tract at residues 462 to 491 is disordered; sequence PPNQPLAAIDSENVENDKLPPPLQPQVYAG.

In terms of assembly, interacts with RGS14; the interaction is GTP-dependent. Heterodimer with RABEP1. The heterodimer binds RAB4A and RAB5A that have been activated by GTP-binding. Interacts with RAB21, and with 100-fold lower affinity also with RAB22. Binds TSC2, GGA1, GGA2, GGA3, AP1G1 and AP1G2. Interacts with ubiquitinated EGFR. In terms of processing, monoubiquitinated.

The protein resides in the cytoplasm. It localises to the early endosome. Its subcellular location is the recycling endosome. Functionally, rab effector protein acting as linker between gamma-adaptin, RAB4A or RAB5A. Involved in endocytic membrane fusion and membrane trafficking of recycling endosomes. Stimulates nucleotide exchange on RAB5A. Can act as a ubiquitin ligase. In Homo sapiens (Human), this protein is Rab5 GDP/GTP exchange factor (RABGEF1).